The following is a 314-amino-acid chain: tRNA dimethylallyltransferase (314 aa).

14-21 provides a ligand contact to ATP; sequence GPTASGKT. Position 16-21 (16-21) interacts with substrate; that stretch reads TASGKT. Interaction with substrate tRNA stretches follow at residues 39 to 42, 163 to 167, and 245 to 250; these read DSAQ, QRLQR, and RCVGYR.

It belongs to the IPP transferase family. As to quaternary structure, monomer. It depends on Mg(2+) as a cofactor.

The enzyme catalyses adenosine(37) in tRNA + dimethylallyl diphosphate = N(6)-dimethylallyladenosine(37) in tRNA + diphosphate. Functionally, catalyzes the transfer of a dimethylallyl group onto the adenine at position 37 in tRNAs that read codons beginning with uridine, leading to the formation of N6-(dimethylallyl)adenosine (i(6)A). The polypeptide is tRNA dimethylallyltransferase (Dechloromonas aromatica (strain RCB)).